The primary structure comprises 209 residues: MVTIALPKGRLTEEATELFQRSSLISIDISQETRKLVLEDPRGNLRFLMVKPFDVPTYVEYGIADMGIVGKDVLLEVNKKVYELLDLKIGKCFIALAGPKGLREELLKKPEKIIATKFPNITKEYFENVLGEDVQIIKLNGSVELAPILGLSDMIVDIVESGRTLRENGLEVYEKLYDISARLIINRASLKLKREIEGIVNCLERMILQ.

It belongs to the ATP phosphoribosyltransferase family. Short subfamily. As to quaternary structure, heteromultimer composed of HisG and HisZ subunits.

It localises to the cytoplasm. The catalysed reaction is 1-(5-phospho-beta-D-ribosyl)-ATP + diphosphate = 5-phospho-alpha-D-ribose 1-diphosphate + ATP. Its pathway is amino-acid biosynthesis; L-histidine biosynthesis; L-histidine from 5-phospho-alpha-D-ribose 1-diphosphate: step 1/9. Functionally, catalyzes the condensation of ATP and 5-phosphoribose 1-diphosphate to form N'-(5'-phosphoribosyl)-ATP (PR-ATP). Has a crucial role in the pathway because the rate of histidine biosynthesis seems to be controlled primarily by regulation of HisG enzymatic activity. The polypeptide is ATP phosphoribosyltransferase (Caldicellulosiruptor saccharolyticus (strain ATCC 43494 / DSM 8903 / Tp8T 6331)).